The primary structure comprises 1303 residues: Endoplasmic reticulum transmembrane helix translocase spfA (1303 aa).

2 helical membrane passes run 25–45 and 57–77; these read LHAYVWPFLIIWPAFFAVYLS and EWTFVWSGSIITAQSLLWLMT. The A-domain; part 1 stretch occupies residues 158–191; the sequence is KPPVKVFQQAQGLTSKEEIDRIQHHYGDNTFDIP. Helical transmembrane passes span 201-221 and 223-243; these read EHAVAPFFVFQVFCVGLWMLD and YWYYSLFTLFMLVVFESTVVW. An A-domain; part 2 region spans residues 256 to 408; it reads NIKPYDVWVY…LVRTMIYSTE (153 aa). N287 is a glycosylation site (N-linked (GlcNAc...) asparagine). A helical transmembrane segment spans residues 415–435; that stretch reads VEALLFILFLLIFAIAAAWYV. N-linked (GlcNAc...) asparagine glycosylation occurs at N474. The interval 484–513 is P-domain; part 1; it reads AIFCTEPFRIPFAGRVDVACFDKTGTLTGE. D505 functions as the 4-aspartylphosphate intermediate in the catalytic mechanism. D505 and T507 together coordinate Mg(2+). 505–507 lines the ATP pocket; the sequence is DKT. The tract at residues 515–721 is N-domain; that stretch reads LVVDGIAGLT…FAGFLVLQCP (207 aa). N589 carries N-linked (GlcNAc...) asparagine glycosylation. F616 and R678 together coordinate ATP. The interval 724–883 is P-domain; part 2; it reads EDAIKAVRML…HVGVALLNGS (160 aa). N734 carries N-linked (GlcNAc...) asparagine glycosylation. Residues D746 and 862 to 866 each bind ATP; that span reads DGTND. D862 is a binding site for Mg(2+). The tract at residues 884 to 1019 is arm-like; sequence PEDLAKIAEH…ELDDSEPPTI (136 aa). N958 carries an N-linked (GlcNAc...) asparagine glycan. Residues 1020-1035 are P-domain; part 3; sequence KLGDASVAAPFTSKLA. 5 helical membrane-spanning segments follow: residues 1060–1080, 1082–1102, 1122–1142, 1201–1221, and 1239–1259; these read ILALNCLISAYSLSVIYLDGI, FGDGQVTISGMLMSVCFLSIS, VYIIGSVLGQFAIHIATLIYL, AMYWGLVAASGVAFSCATEFI, and VTLTVLMIIDYAGCWIIENVL. A disordered region spans residues 1277 to 1303; the sequence is DQLQREMERKKQEELETQAEKERQRKV.

This sequence belongs to the cation transport ATPase (P-type) (TC 3.A.3) family. Type V subfamily. Requires Mg(2+) as cofactor.

The protein resides in the endoplasmic reticulum membrane. It carries out the reaction [protein]-with a C-terminal TM segment(out) + ATP + H2O = [protein]-with a C-terminal TM segment(in) + ADP + phosphate + H(+). With respect to regulation, the ATPase activity is stimulated by phosphatidylinositol 4-phosphate (PI4P). Its function is as follows. Endoplasmic reticulum (ER) translocase required to remove mitochondrial transmembrane proteins mistargeted to the endoplasmic reticulum. Acts as a dislocase that mediates the ATP-dependent extraction of mislocalized mitochondrial transmembrane proteins from the endoplasmic reticulum membrane. Works in concert with the ER Ca(2+) pump srcA to support ER homeostasis. With srcA, also supports redox homeostasis and virulence. This Aspergillus fumigatus (strain ATCC MYA-4609 / CBS 101355 / FGSC A1100 / Af293) (Neosartorya fumigata) protein is Endoplasmic reticulum transmembrane helix translocase spfA.